Reading from the N-terminus, the 332-residue chain is MDPRSEVLLRQAELFQGSLLLVGLPADDLLGKLPDARGWCWHAGDQAALDARFEGRVDFGVEAPQTGFEAAVLFLPKARDLTDYLLNALASRLAGRELFLVGEKRGGIEAAAKQLSPFGRARKLDSARHCQLWQVTVEHAPQAVSLDSLARPYQIELQDGPLTVVSLPGVFSHGRLDRGSALLLENIDKLPSGNLLDFGCGAGVLGAAIKRRYPHNEVIMLDVDAFATASSRLTLAANGLQAQVLTGDGIDAAPMGLNTILSNPPFHVGVHTDYMATENLLRKARQHLKSGGELRLVANNFLRYQPLIEEHVGQCEVRAQGNGFKIYSAKRP.

It belongs to the methyltransferase superfamily. RsmC family. Monomer.

It is found in the cytoplasm. It catalyses the reaction guanosine(1207) in 16S rRNA + S-adenosyl-L-methionine = N(2)-methylguanosine(1207) in 16S rRNA + S-adenosyl-L-homocysteine + H(+). In terms of biological role, specifically methylates the guanine in position 1207 of 16S rRNA in the 30S particle. The polypeptide is Ribosomal RNA small subunit methyltransferase C (Pseudomonas syringae pv. syringae (strain B728a)).